The primary structure comprises 298 residues: GTPase Era (298 aa).

The 168-residue stretch at 4–171 (KSGFVSIVGR…VEGIFELLPE (168 aa)) folds into the Era-type G domain. The interval 12–19 (GRPNVGKS) is G1. 12-19 (GRPNVGKS) lines the GTP pocket. The tract at residues 38–42 (QTTRN) is G2. Residues 59–62 (DTPG) form a G3 region. GTP-binding positions include 59–63 (DTPGV) and 121–124 (NKID). Residues 121 to 124 (NKID) are G4. The G5 stretch occupies residues 150-152 (ISA). In terms of domain architecture, KH type-2 spans 202–280 (TREEIPHSVA…YLDLWVKVKE (79 aa)).

It belongs to the TRAFAC class TrmE-Era-EngA-EngB-Septin-like GTPase superfamily. Era GTPase family. Monomer.

It localises to the cytoplasm. It is found in the cell membrane. Its function is as follows. An essential GTPase that binds both GDP and GTP, with rapid nucleotide exchange. Plays a role in 16S rRNA processing and 30S ribosomal subunit biogenesis and possibly also in cell cycle regulation and energy metabolism. The protein is GTPase Era of Carboxydothermus hydrogenoformans (strain ATCC BAA-161 / DSM 6008 / Z-2901).